Here is a 664-residue protein sequence, read N- to C-terminus: UvrABC system protein B (664 aa).

Positions 24-182 (AGLRAGYRHQ…QLIDLQFERN (159 aa)) constitute a Helicase ATP-binding domain. An ATP-binding site is contributed by 37–44 (GATGTGKT). Positions 90-113 (YYDEYTPEAYVPSKDLYIEKEASI) match the Beta-hairpin motif. A Helicase C-terminal domain is found at 427-593 (QIDDLLGEIR…GIAKGVRDLT (167 aa)). In terms of domain architecture, UVR spans 624 to 659 (LKLIKDLEKQMKQAAKALAFEKAAALRDQIVELRQA).

This sequence belongs to the UvrB family. As to quaternary structure, forms a heterotetramer with UvrA during the search for lesions. Interacts with UvrC in an incision complex.

The protein localises to the cytoplasm. Its function is as follows. The UvrABC repair system catalyzes the recognition and processing of DNA lesions. A damage recognition complex composed of 2 UvrA and 2 UvrB subunits scans DNA for abnormalities. Upon binding of the UvrA(2)B(2) complex to a putative damaged site, the DNA wraps around one UvrB monomer. DNA wrap is dependent on ATP binding by UvrB and probably causes local melting of the DNA helix, facilitating insertion of UvrB beta-hairpin between the DNA strands. Then UvrB probes one DNA strand for the presence of a lesion. If a lesion is found the UvrA subunits dissociate and the UvrB-DNA preincision complex is formed. This complex is subsequently bound by UvrC and the second UvrB is released. If no lesion is found, the DNA wraps around the other UvrB subunit that will check the other stand for damage. In Chloroflexus aggregans (strain MD-66 / DSM 9485), this protein is UvrABC system protein B.